The sequence spans 248 residues: Probable septum site-determining protein MinC (248 aa).

The segment at 115 to 144 (PTAVSPPPPPPPPARAEPAPPAARPAPGRM) is disordered. Pro residues predominate over residues 118–138 (VSPPPPPPPPARAEPAPPAAR).

The protein belongs to the MinC family. Interacts with MinD and FtsZ.

In terms of biological role, cell division inhibitor that blocks the formation of polar Z ring septums. Rapidly oscillates between the poles of the cell to destabilize FtsZ filaments that have formed before they mature into polar Z rings. Prevents FtsZ polymerization. The polypeptide is Probable septum site-determining protein MinC (Xanthomonas euvesicatoria pv. vesicatoria (strain 85-10) (Xanthomonas campestris pv. vesicatoria)).